We begin with the raw amino-acid sequence, 260 residues long: UPF0246 protein APP7_0648 (260 aa).

This sequence belongs to the UPF0246 family.

The polypeptide is UPF0246 protein APP7_0648 (Actinobacillus pleuropneumoniae serotype 7 (strain AP76)).